The primary structure comprises 206 residues: A-type ATP synthase subunit E (206 aa).

It belongs to the V-ATPase E subunit family. In terms of assembly, has multiple subunits with at least A(3), B(3), C, D, E, F, H, I and proteolipid K(x).

The protein localises to the cell membrane. In terms of biological role, component of the A-type ATP synthase that produces ATP from ADP in the presence of a proton gradient across the membrane. The polypeptide is A-type ATP synthase subunit E (Methanothermobacter thermautotrophicus (strain ATCC 29096 / DSM 1053 / JCM 10044 / NBRC 100330 / Delta H) (Methanobacterium thermoautotrophicum)).